A 391-amino-acid chain; its full sequence is CBS domain-containing protein CBSX5 (391 aa).

CBS domains lie at 16–81 (GKPP…DHDH) and 331–391 (MARK…ENDM).

This is CBS domain-containing protein CBSX5 (CBSX5) from Arabidopsis thaliana (Mouse-ear cress).